Reading from the N-terminus, the 682-residue chain is K(+)-insensitive pyrophosphate-energized proton pump 2 (682 aa).

5 helical membrane passes run 1 to 21, 56 to 76, 78 to 98, 130 to 150, and 160 to 180; these read MELF…ALYM, TIAG…RQYH, AVAF…GMYV, LAVT…FGGA, and IVGF…SGGI. Lys183 serves as a coordination point for substrate. The Mg(2+) site is built by Asp186, Asp190, and Asp216. 7 helical membrane passes run 237 to 257, 258 to 278, 291 to 311, 318 to 338, 353 to 373, 375 to 395, and 404 to 424; these read IGAM…GIVF, PLVA…FVRA, GYIV…RYML, FIYF…FVLI, IARA…AVGF, STAL…WLGL, and LYGT…ILAM. Asp432 provides a ligand contact to Mg(2+). 4 helical membrane passes run 468–488, 506–526, 574–594, and 595–615; these read YAIG…IDEV, EVFV…STAI, MVLP…VLKA, and EAAA…ALFL. Ca(2+) is bound by residues Asp623, Asp649, and Asp653. Lys656 is a binding site for substrate. The helical transmembrane segment at 662–682 threads the bilayer; the sequence is SLHVLVKLISTITLVLAGLFI.

It belongs to the H(+)-translocating pyrophosphatase (TC 3.A.10) family. K(+)-insensitive subfamily. As to quaternary structure, homodimer. Mg(2+) is required as a cofactor.

The protein resides in the cell membrane. The enzyme catalyses diphosphate + H2O + H(+)(in) = 2 phosphate + 2 H(+)(out). Functionally, proton pump that utilizes the energy of pyrophosphate hydrolysis as the driving force for proton movement across the membrane. Generates a proton motive force. The polypeptide is K(+)-insensitive pyrophosphate-energized proton pump 2 (Moorella thermoacetica (strain ATCC 39073 / JCM 9320)).